Reading from the N-terminus, the 1376-residue chain is DNA-directed RNA polymerase subunit beta'' (1376 aa).

Residues Cys-221, Cys-290, Cys-297, and Cys-300 each coordinate Zn(2+). The tract at residues 895–919 (PSGSGFPSDNELDHSNRNPFSSSYP) is disordered.

This sequence belongs to the RNA polymerase beta' chain family. RpoC2 subfamily. As to quaternary structure, in plastids the minimal PEP RNA polymerase catalytic core is composed of four subunits: alpha, beta, beta', and beta''. When a (nuclear-encoded) sigma factor is associated with the core the holoenzyme is formed, which can initiate transcription. The cofactor is Zn(2+).

It is found in the plastid. The protein localises to the chloroplast. It catalyses the reaction RNA(n) + a ribonucleoside 5'-triphosphate = RNA(n+1) + diphosphate. Its function is as follows. DNA-dependent RNA polymerase catalyzes the transcription of DNA into RNA using the four ribonucleoside triphosphates as substrates. This Pelargonium hortorum (Common geranium) protein is DNA-directed RNA polymerase subunit beta''.